The primary structure comprises 358 residues: Ornithine cyclodeaminase (358 aa).

2 residues coordinate L-ornithine: R52 and K76. NAD(+)-binding positions include T91, R119, 146–147 (AQ), D168, T208, 231–234 (VGGD), K238, and S299. Residue R119 coordinates L-ornithine. D234 is a binding site for L-ornithine. The active-site Proton donor/acceptor is D234. V300 provides a ligand contact to L-ornithine.

The protein belongs to the ornithine cyclodeaminase/mu-crystallin family. NAD(+) is required as a cofactor.

It carries out the reaction L-ornithine = L-proline + NH4(+). The protein operates within amino-acid biosynthesis; L-proline biosynthesis; L-proline from L-ornithine: step 1/1. In terms of biological role, catalyzes the conversion of L-ornithine into L-proline with release of ammonia. This chain is Ornithine cyclodeaminase, found in Brucella suis biovar 1 (strain 1330).